We begin with the raw amino-acid sequence, 208 residues long: NAD(P)H dehydrogenase (quinone) (208 aa).

A Flavodoxin-like domain is found at 4-192 (VLVLYYSSYG…DGARFQGRHV (189 aa)). FMN contacts are provided by residues 10-15 (SSYGHV) and 78-80 (TRF). Y12 is a binding site for NAD(+). A substrate-binding site is contributed by W98. Residues 113 to 119 (STGSQHG) and H134 contribute to the FMN site. The segment at 161 to 183 (YGASTLADDGDGGDRQPSANELD) is disordered.

This sequence belongs to the WrbA family. FMN is required as a cofactor.

It catalyses the reaction a quinone + NADH + H(+) = a quinol + NAD(+). It carries out the reaction a quinone + NADPH + H(+) = a quinol + NADP(+). The polypeptide is NAD(P)H dehydrogenase (quinone) (Paracoccus denitrificans (strain Pd 1222)).